The chain runs to 163 residues: Lipoprotein signal peptidase (163 aa).

The next 4 helical transmembrane spans lie at 9–29 (AWPW…SKYL), 42–62 (ILPF…SFLG), 67–87 (WQII…ILWL), and 93–113 (SEIM…GNFI). Active-site residues include Asp123 and Asp141. A helical membrane pass occupies residues 137–157 (FNVADSAICVGVFLLIVHMLL).

It belongs to the peptidase A8 family.

The protein localises to the cell inner membrane. The enzyme catalyses Release of signal peptides from bacterial membrane prolipoproteins. Hydrolyzes -Xaa-Yaa-Zaa-|-(S,diacylglyceryl)Cys-, in which Xaa is hydrophobic (preferably Leu), and Yaa (Ala or Ser) and Zaa (Gly or Ala) have small, neutral side chains.. It participates in protein modification; lipoprotein biosynthesis (signal peptide cleavage). This protein specifically catalyzes the removal of signal peptides from prolipoproteins. The polypeptide is Lipoprotein signal peptidase (Coxiella burnetii (strain RSA 331 / Henzerling II)).